The sequence spans 294 residues: Ribosomal RNA small subunit methyltransferase I (294 aa).

The protein belongs to the methyltransferase superfamily. RsmI family.

It localises to the cytoplasm. The enzyme catalyses cytidine(1402) in 16S rRNA + S-adenosyl-L-methionine = 2'-O-methylcytidine(1402) in 16S rRNA + S-adenosyl-L-homocysteine + H(+). In terms of biological role, catalyzes the 2'-O-methylation of the ribose of cytidine 1402 (C1402) in 16S rRNA. The polypeptide is Ribosomal RNA small subunit methyltransferase I (Mesorhizobium japonicum (strain LMG 29417 / CECT 9101 / MAFF 303099) (Mesorhizobium loti (strain MAFF 303099))).